A 205-amino-acid polypeptide reads, in one-letter code: Type III pantothenate kinase (205 aa).

ATP is bound at residue 5 to 12 (DIGNTTYH). Residues Tyr68 and 72–75 (GIDR) each bind substrate. Asp74 serves as the catalytic Proton acceptor. Asp89 serves as a coordination point for K(+). Residue Ser92 coordinates ATP. Ser144 is a substrate binding site.

This sequence belongs to the type III pantothenate kinase family. As to quaternary structure, homodimer. Requires NH4(+) as cofactor. The cofactor is K(+).

The protein resides in the cytoplasm. The catalysed reaction is (R)-pantothenate + ATP = (R)-4'-phosphopantothenate + ADP + H(+). It functions in the pathway cofactor biosynthesis; coenzyme A biosynthesis; CoA from (R)-pantothenate: step 1/5. Its function is as follows. Catalyzes the phosphorylation of pantothenate (Pan), the first step in CoA biosynthesis. This Sulfurimonas denitrificans (strain ATCC 33889 / DSM 1251) (Thiomicrospira denitrificans (strain ATCC 33889 / DSM 1251)) protein is Type III pantothenate kinase.